The sequence spans 708 residues: Ion-translocating oxidoreductase complex subunit C (708 aa).

4Fe-4S ferredoxin-type domains lie at 369-397 and 407-436; these read GEPQ…QQLY and KATT…VQYF. Positions 377, 380, 383, 387, 416, 419, 422, and 426 each coordinate [4Fe-4S] cluster. The disordered stretch occupies residues 599–686; sequence KARKLEQQQS…EEQVDPRKAA (88 aa).

The protein belongs to the 4Fe4S bacterial-type ferredoxin family. RnfC subfamily. The complex is composed of six subunits: RsxA, RsxB, RsxC, RsxD, RsxE and RsxG. [4Fe-4S] cluster serves as cofactor.

The protein localises to the cell inner membrane. Its function is as follows. Part of a membrane-bound complex that couples electron transfer with translocation of ions across the membrane. Required to maintain the reduced state of SoxR. The sequence is that of Ion-translocating oxidoreductase complex subunit C from Escherichia coli (strain 55989 / EAEC).